Here is a 145-residue protein sequence, read N- to C-terminus: D-aminoacyl-tRNA deacylase (145 aa).

Positions Gly137 to Pro138 match the Gly-cisPro motif, important for rejection of L-amino acids motif.

This sequence belongs to the DTD family. In terms of assembly, homodimer.

It localises to the cytoplasm. It catalyses the reaction glycyl-tRNA(Ala) + H2O = tRNA(Ala) + glycine + H(+). It carries out the reaction a D-aminoacyl-tRNA + H2O = a tRNA + a D-alpha-amino acid + H(+). Its function is as follows. An aminoacyl-tRNA editing enzyme that deacylates mischarged D-aminoacyl-tRNAs. Also deacylates mischarged glycyl-tRNA(Ala), protecting cells against glycine mischarging by AlaRS. Acts via tRNA-based rather than protein-based catalysis; rejects L-amino acids rather than detecting D-amino acids in the active site. By recycling D-aminoacyl-tRNA to D-amino acids and free tRNA molecules, this enzyme counteracts the toxicity associated with the formation of D-aminoacyl-tRNA entities in vivo and helps enforce protein L-homochirality. This is D-aminoacyl-tRNA deacylase from Rhodococcus opacus (strain B4).